We begin with the raw amino-acid sequence, 240 residues long: Vesicle-associated membrane protein 727 (240 aa).

At 1–215 (MSQKGLIYSF…MWLQSLQMKL (215 aa)) the chain is on the cytoplasmic side. In terms of domain architecture, Longin spans 6-133 (LIYSFVAKGT…NLDREFGPIL (128 aa)). The region spanning 149 to 209 (KLSKLKAQIT…RQLRRKMWLQ (61 aa)) is the v-SNARE coiled-coil homology domain. A helical; Anchor for type IV membrane protein transmembrane segment spans residues 216 to 236 (MVAGAVFSFILIVWVVACGGF). Residues 237–240 (KCSS) lie on the Vesicular side of the membrane.

This sequence belongs to the synaptobrevin family. In terms of assembly, interacts with subunits of the class C core vacuole/endosome tethering (CORVET) complex including VPS11, VCL1, VPS18, VPS33, VPS3 and VPS8. Highly expressed in flowers. Detected in leaves, stems and roots.

Its subcellular location is the early endosome membrane. It localises to the endosome membrane. In terms of biological role, involved in the targeting and/or fusion of transport vesicles to their target membrane. The polypeptide is Vesicle-associated membrane protein 727 (VAMP727) (Arabidopsis thaliana (Mouse-ear cress)).